A 76-amino-acid chain; its full sequence is Acyl carrier protein (76 aa).

Residues 1–76 (MALLDDVKAV…DAIKYIENNA (76 aa)) form the Carrier domain. Position 36 is an O-(pantetheine 4'-phosphoryl)serine (Ser36).

Belongs to the acyl carrier protein (ACP) family. 4'-phosphopantetheine is transferred from CoA to a specific serine of apo-ACP by AcpS. This modification is essential for activity because fatty acids are bound in thioester linkage to the sulfhydryl of the prosthetic group.

It is found in the cytoplasm. It participates in lipid metabolism; fatty acid biosynthesis. In terms of biological role, carrier of the growing fatty acid chain in fatty acid biosynthesis. This Aliarcobacter butzleri (strain RM4018) (Arcobacter butzleri) protein is Acyl carrier protein.